Reading from the N-terminus, the 133-residue chain is Glutaredoxin-C4, chloroplastic (133 aa).

Residues 1-13 (MGMAQSSSSSSRP) are compositionally biased toward low complexity. The tract at residues 1 to 25 (MGMAQSSSSSSRPSDSEQLEEPSKP) is disordered. A chloroplast-targeting transit peptide spans 1 to 27 (MGMAQSSSSSSRPSDSEQLEEPSKPVM). The Glutaredoxin domain occupies 29-129 (LDKAKEIVAS…PLLTEAGAIA (101 aa)). Cysteines 49 and 52 form a disulfide.

This sequence belongs to the glutaredoxin family. CPYC subfamily.

It localises to the plastid. It is found in the chloroplast. In terms of biological role, has a glutathione-disulfide oxidoreductase activity in the presence of NADPH and glutathione reductase. Reduces low molecular weight disulfides and proteins. In Oryza sativa subsp. japonica (Rice), this protein is Glutaredoxin-C4, chloroplastic (GRXC4).